Here is a 234-residue protein sequence, read N- to C-terminus: Glycerol uptake facilitator protein (234 aa).

The next 6 helical transmembrane spans lie at Phe9–Pro29, Gly37–Gly57, Pro61–Ala81, Val83–Leu103, Leu135–Tyr155, and Ala159–Gly179. The NPA 1 motif lies at Asn65–Ala67. The NPA 2 motif lies at Asn186–Ala188. A helical membrane pass occupies residues Trp214–Phe234.

It belongs to the MIP/aquaporin (TC 1.A.8) family.

It is found in the cell membrane. The catalysed reaction is glycerol(in) = glycerol(out). In terms of biological role, mediates glycerol diffusion across the cytoplasmic membrane via a pore-type mechanism. In Streptococcus pneumoniae (strain ATCC BAA-255 / R6), this protein is Glycerol uptake facilitator protein (glpF).